The chain runs to 132 residues: D-ribose pyranase (132 aa).

The active-site Proton donor is the histidine 20. Substrate is bound by residues aspartate 28, histidine 99, and 121–123 (YSN).

It belongs to the RbsD / FucU family. RbsD subfamily. In terms of assembly, homodecamer.

The protein resides in the cytoplasm. The catalysed reaction is beta-D-ribopyranose = beta-D-ribofuranose. Its pathway is carbohydrate metabolism; D-ribose degradation; D-ribose 5-phosphate from beta-D-ribopyranose: step 1/2. Catalyzes the interconversion of beta-pyran and beta-furan forms of D-ribose. In Streptococcus agalactiae serotype Ia (strain ATCC 27591 / A909 / CDC SS700), this protein is D-ribose pyranase.